A 160-amino-acid chain; its full sequence is tRNA (cytidine(34)-2'-O)-methyltransferase (160 aa).

Positions 78, 100, 122, and 130 each coordinate S-adenosyl-L-methionine.

It belongs to the class IV-like SAM-binding methyltransferase superfamily. RNA methyltransferase TrmH family. TrmL subfamily. In terms of assembly, homodimer.

It is found in the cytoplasm. It carries out the reaction cytidine(34) in tRNA + S-adenosyl-L-methionine = 2'-O-methylcytidine(34) in tRNA + S-adenosyl-L-homocysteine + H(+). It catalyses the reaction 5-carboxymethylaminomethyluridine(34) in tRNA(Leu) + S-adenosyl-L-methionine = 5-carboxymethylaminomethyl-2'-O-methyluridine(34) in tRNA(Leu) + S-adenosyl-L-homocysteine + H(+). Functionally, methylates the ribose at the nucleotide 34 wobble position in the two leucyl isoacceptors tRNA(Leu)(CmAA) and tRNA(Leu)(cmnm5UmAA). Catalyzes the methyl transfer from S-adenosyl-L-methionine to the 2'-OH of the wobble nucleotide. This Haemophilus influenzae (strain ATCC 51907 / DSM 11121 / KW20 / Rd) protein is tRNA (cytidine(34)-2'-O)-methyltransferase.